The sequence spans 249 residues: Probable aquaporin TIP-type (249 aa).

The next 2 helical transmembrane spans lie at 22-42 (AGLA…GSGI) and 56-76 (AGLI…VSVG). Residues 85–87 (NPA) carry the NPA 1 motif. The next 3 membrane-spanning stretches (helical) occupy residues 103–123 (IVYI…LVFV), 137–157 (VGVG…VYTV), and 169–189 (IGII…LVGG). The short motif at 197-199 (NPA) is the NPA 2 element. The chain crosses the membrane as a helical span at residues 217-237 (YWAGPLIGGGIAGLVYEVLFI).

The protein belongs to the MIP/aquaporin (TC 1.A.8) family. TIP (TC 1.A.8.10) subfamily. Expression is highest in root tips, with slightly lower levels of hybridizing mRNA in stems, and whole roots, and much lower levels in nodules and leaves.

The protein localises to the membrane. In terms of biological role, aquaporins facilitate the transport of water and small neutral solutes across cell membranes. The chain is Probable aquaporin TIP-type (MCP1) from Medicago sativa (Alfalfa).